The following is a 78-amino-acid chain: Exodeoxyribonuclease 7 small subunit (78 aa).

The protein belongs to the XseB family. As to quaternary structure, heterooligomer composed of large and small subunits.

The protein localises to the cytoplasm. The enzyme catalyses Exonucleolytic cleavage in either 5'- to 3'- or 3'- to 5'-direction to yield nucleoside 5'-phosphates.. Bidirectionally degrades single-stranded DNA into large acid-insoluble oligonucleotides, which are then degraded further into small acid-soluble oligonucleotides. In Desulfitobacterium hafniense (strain Y51), this protein is Exodeoxyribonuclease 7 small subunit.